The following is a 206-amino-acid chain: Small ribosomal subunit protein uS4 (206 aa).

Positions 96-156 (GRLDNVVYRM…EKSKKQARIK (61 aa)) constitute an S4 RNA-binding domain.

The protein belongs to the universal ribosomal protein uS4 family. As to quaternary structure, part of the 30S ribosomal subunit. Contacts protein S5. The interaction surface between S4 and S5 is involved in control of translational fidelity.

In terms of biological role, one of the primary rRNA binding proteins, it binds directly to 16S rRNA where it nucleates assembly of the body of the 30S subunit. Functionally, with S5 and S12 plays an important role in translational accuracy. This chain is Small ribosomal subunit protein uS4, found in Actinobacillus succinogenes (strain ATCC 55618 / DSM 22257 / CCUG 43843 / 130Z).